We begin with the raw amino-acid sequence, 325 residues long: NADH-quinone oxidoreductase subunit H (325 aa).

Transmembrane regions (helical) follow at residues 11-31 (ILISVLKAVVILLVVVTCGAF), 81-101 (AIFTLAPVIAFTSLLLSFAIV), 114-134 (IGILFFLMMAGLAVYAVLFAG), 154-174 (LSYEVFLGLSLMGVVAQAGSF), 186-206 (VWNVIPQFFGFLTFAIAGVAV), 237-257 (FFVGEYIGIVTVSALIVTLFF), 265-285 (LPPFIWFALKTAFFMVMFILI), and 304-324 (VCLPLTLLNLLATAAVILYNA).

Belongs to the complex I subunit 1 family. As to quaternary structure, NDH-1 is composed of 13 different subunits. Subunits NuoA, H, J, K, L, M, N constitute the membrane sector of the complex.

It localises to the cell inner membrane. The catalysed reaction is a quinone + NADH + 5 H(+)(in) = a quinol + NAD(+) + 4 H(+)(out). NDH-1 shuttles electrons from NADH, via FMN and iron-sulfur (Fe-S) centers, to quinones in the respiratory chain. The immediate electron acceptor for the enzyme in this species is believed to be ubiquinone. Couples the redox reaction to proton translocation (for every two electrons transferred, four hydrogen ions are translocated across the cytoplasmic membrane), and thus conserves the redox energy in a proton gradient. This subunit may bind ubiquinone. In Yersinia pseudotuberculosis serotype O:1b (strain IP 31758), this protein is NADH-quinone oxidoreductase subunit H.